The sequence spans 85 residues: Elongation factor 1-beta (85 aa).

This sequence belongs to the EF-1-beta/EF-1-delta family.

In terms of biological role, promotes the exchange of GDP for GTP in EF-1-alpha/GDP, thus allowing the regeneration of EF-1-alpha/GTP that could then be used to form the ternary complex EF-1-alpha/GTP/AAtRNA. This chain is Elongation factor 1-beta, found in Methanoregula boonei (strain DSM 21154 / JCM 14090 / 6A8).